We begin with the raw amino-acid sequence, 635 residues long: MSLISMHGAWLSFSDAPLLDNAELHIEDNERVCLVGRNGAGKSTLMKILNREQGLDDGRIIYEQDLIVARLQQDPPRNVEGSVYDFVAEGIEEQAEYLKRYHDISRLVMNDPSEKNLNELAKVQEQLDHHNLWQLENRINEVLAQLGLDPNVALSSLSGGWLRKAALGRALVSNPRVLLLDEPTNHLDIETIDWLEGFLKTFNGTIIFISHDRSFIRNMATRIVDLDRGKLVTYPGNYDQYLLEKEEALRVEELQNAEFDRKLAQEEVWIRQGIKARRTRNEGRVRALKAMRRERGERREVMGTAKMQVEEASRSGKIVFEMEDVCYQVNGKQLVKDFSAQVLRGDKIALIGPNGCGKTTLLKLMLGQLQADSGRIHVGTKLEVAYFDQHRAELDPDKTVMDNLAEGKQEVMVNGKPRHVLGYLQDFLFHPKRAMTPVRALSGGERNRLLLARLFLKPSNLLILDEPTNDLDVETLELLEELIDSYQGTVLLVSHDRQFVDNTVTECWIFEGGGKIGRYVGGYHDARGQQEQYVALKQPAVKKTEEAAAAKAETVKRSSSKLSYKLQRELEQLPQLLEDLEAKLEALQTQVADASFFSQPHEQTQKVLADMAAAEQELEQAFERWEYLEALKNGG.

2 ABC transporter domains span residues 1 to 253 (MSLI…RVEE) and 320 to 546 (FEME…KTEE). Residues 36–43 (GRNGAGKS) and 352–359 (GPNGCGKT) each bind ATP. A C-terminal domain (CTD), binds DNA, required to complement a deletion mutant region spans residues 551–635 (KAETVKRSSS…EYLEALKNGG (85 aa)). Residues 563-631 (SYKLQRELEQ…FERWEYLEAL (69 aa)) adopt a coiled-coil conformation.

It belongs to the ABC transporter superfamily. ABCF family. Uup subfamily.

The protein localises to the cytoplasm. The enzyme catalyses ATP + H2O = ADP + phosphate + H(+). ATPase activity inhibited by N-ethylmaleimide but not by vanadate. Its function is as follows. Probably plays a role in ribosome assembly or function; overexpression suppresses cold-sensitive growth of a bipA deletion. May be involved in resolution of branched DNA intermediates that result from template switching in postreplication gaps. Binds DNA at Holliday junctions. May be involved in the correct segregation of nucleoids. Has ATPase activity, binds DNA non-sequence specifically; the presence of DNA does not change the ATPase activity. Mutations in this gene cause an increase in RecA-independent precise excision of transposons and insertion elements, and also reduce bacteriophage Mu growth. Genetic interactions among priB, dam, lexA, nagC, polA, rdgB, rdgB, rep and uup link the PriA-PriB replication restart pathway to DNA double-strand break repair. This chain is ATP-binding protein Uup, found in Escherichia coli (strain K12).